A 409-amino-acid chain; its full sequence is Glycosyltransferase GtfC (409 aa).

This sequence belongs to the glycosyltransferase 28 family.

It carries out the reaction dTDP-beta-L-vancosamine + devancoaminyl-vancomycin = epivancomycin + dTDP + H(+). The enzyme catalyses chloroorienticin B + dTDP-beta-L-vancosamine = chloroeremomycin + dTDP + H(+). It participates in antibiotic biosynthesis; vancomycin biosynthesis. Its function is as follows. Catalyzes the attachment of dTDP-L-4-epi-vancosamine to chloroorienticin B to form chloroeremomycin in the biosynthesis of glycopeptide antibiotic chloroeremomycin, a member of the vancomycin group of antibiotics. Also able to use dTDP-L-4-epi-vancosamine and devancoaminyl-vancomycin (DVV) to create epivancomycin. Acts downstream of GtfA. In Amycolatopsis orientalis (Nocardia orientalis), this protein is Glycosyltransferase GtfC (gtfC).